We begin with the raw amino-acid sequence, 160 residues long: Putative 4-hydroxy-4-methyl-2-oxoglutarate aldolase (160 aa).

Substrate is bound by residues 76–79 (GGNL) and arginine 98. Aspartate 99 provides a ligand contact to a divalent metal cation.

The protein belongs to the class II aldolase/RraA-like family. Homotrimer. Requires a divalent metal cation as cofactor.

The catalysed reaction is 4-hydroxy-4-methyl-2-oxoglutarate = 2 pyruvate. It catalyses the reaction oxaloacetate + H(+) = pyruvate + CO2. Functionally, catalyzes the aldol cleavage of 4-hydroxy-4-methyl-2-oxoglutarate (HMG) into 2 molecules of pyruvate. Also contains a secondary oxaloacetate (OAA) decarboxylase activity due to the common pyruvate enolate transition state formed following C-C bond cleavage in the retro-aldol and decarboxylation reactions. This Deinococcus radiodurans (strain ATCC 13939 / DSM 20539 / JCM 16871 / CCUG 27074 / LMG 4051 / NBRC 15346 / NCIMB 9279 / VKM B-1422 / R1) protein is Putative 4-hydroxy-4-methyl-2-oxoglutarate aldolase.